We begin with the raw amino-acid sequence, 689 residues long: tRNA 5-methylaminomethyl-2-thiouridine biosynthesis bifunctional protein MnmC (689 aa).

A tRNA (mnm(5)s(2)U34)-methyltransferase region spans residues 1–245 (MNQRPIQTAT…KREMLTGTLP (245 aa)). The interval 270–689 (IGGGIVSALT…RSPATQESSR (420 aa)) is FAD-dependent cmnm(5)s(2)U34 oxidoreductase.

This sequence in the N-terminal section; belongs to the methyltransferase superfamily. tRNA (mnm(5)s(2)U34)-methyltransferase family. The protein in the C-terminal section; belongs to the DAO family. The cofactor is FAD.

The protein resides in the cytoplasm. It carries out the reaction 5-aminomethyl-2-thiouridine(34) in tRNA + S-adenosyl-L-methionine = 5-methylaminomethyl-2-thiouridine(34) in tRNA + S-adenosyl-L-homocysteine + H(+). Catalyzes the last two steps in the biosynthesis of 5-methylaminomethyl-2-thiouridine (mnm(5)s(2)U) at the wobble position (U34) in tRNA. Catalyzes the FAD-dependent demodification of cmnm(5)s(2)U34 to nm(5)s(2)U34, followed by the transfer of a methyl group from S-adenosyl-L-methionine to nm(5)s(2)U34, to form mnm(5)s(2)U34. This is tRNA 5-methylaminomethyl-2-thiouridine biosynthesis bifunctional protein MnmC from Yersinia pseudotuberculosis serotype O:1b (strain IP 31758).